We begin with the raw amino-acid sequence, 106 residues long: UPF0145 protein BDI_2732 (106 aa).

This sequence belongs to the UPF0145 family.

The sequence is that of UPF0145 protein BDI_2732 from Parabacteroides distasonis (strain ATCC 8503 / DSM 20701 / CIP 104284 / JCM 5825 / NCTC 11152).